Consider the following 53-residue polypeptide: ATP synthase protein 8 (53 aa).

The chain crosses the membrane as a helical span at residues 5–25 (APISWLTLFFVFSITLVIFNI).

This sequence belongs to the ATPase protein 8 family. F-type ATPases have 2 components, CF(1) - the catalytic core - and CF(0) - the membrane proton channel.

Its subcellular location is the mitochondrion membrane. In terms of biological role, mitochondrial membrane ATP synthase (F(1)F(O) ATP synthase or Complex V) produces ATP from ADP in the presence of a proton gradient across the membrane which is generated by electron transport complexes of the respiratory chain. F-type ATPases consist of two structural domains, F(1) - containing the extramembraneous catalytic core and F(0) - containing the membrane proton channel, linked together by a central stalk and a peripheral stalk. During catalysis, ATP synthesis in the catalytic domain of F(1) is coupled via a rotary mechanism of the central stalk subunits to proton translocation. Part of the complex F(0) domain. Minor subunit located with subunit a in the membrane. This Aedes aegypti (Yellowfever mosquito) protein is ATP synthase protein 8.